The chain runs to 139 residues: Heat shock protein homolog C338.06c (139 aa).

The 113-residue stretch at 27-139 (AWLSCWGPAL…EFTTRIVEIQ (113 aa)) folds into the sHSP domain.

It belongs to the small heat shock protein (HSP20) family.

It localises to the mitochondrion. The polypeptide is Heat shock protein homolog C338.06c (Schizosaccharomyces pombe (strain 972 / ATCC 24843) (Fission yeast)).